Consider the following 709-residue polypeptide: Ral guanine nucleotide dissociation stimulator-like 3 (709 aa).

Residues 26 to 55 are disordered; sequence VYSVSLRRQRSQRSTPERSGEGQTPIPATD. Residues 64-201 form the N-terminal Ras-GEF domain; the sequence is KVRALRAARL…LLEDFLKEAK (138 aa). Disordered stretches follow at residues 203 to 225, 395 to 416, and 502 to 604; these read EQTE…TPGS, SQEE…KLPP, and PPAA…SRVP. Residues 248 to 503 form the Ras-GEF domain; it reads SVDDVAEQLT…YRVSRVIEPP (256 aa). Low complexity-rich tracts occupy residues 502–511 and 533–551; these read PPAASCPSSP and SSPG…SVSP. A phosphoserine mark is found at serine 506 and serine 510. A compositionally biased stretch (pro residues) spans 552–576; the sequence is GSPPSSPRNREPPPPGSPPASPGPQ. Residues serine 553, serine 568, serine 572, serine 577, and serine 600 each carry the phosphoserine modification. Residues 611-706 form an interaction with HRAS, MRAS and RIT1 region; sequence SEARVIRVSI…KEGTGHTLSA (96 aa). A Ras-associating domain is found at 612–699; the sequence is EARVIRVSIN…GDFLLRRKEG (88 aa).

As to quaternary structure, interacts with GTP-bound forms of RIT1, HRAS and MRAS. Widely expressed. Expressed at high levels in the liver and kidney.

In terms of biological role, guanine nucleotide exchange factor (GEF) for Ral-A. Potential effector of GTPase HRas and Ras-related protein M-Ras. Negatively regulates Elk-1-dependent gene induction downstream of HRas and MEKK1. The chain is Ral guanine nucleotide dissociation stimulator-like 3 (Rgl3) from Mus musculus (Mouse).